Here is a 216-residue protein sequence, read N- to C-terminus: UPF0134 protein MPN_344 (216 aa).

The segment covering 47-62 has biased composition (basic and acidic residues); sequence FTIIEDQQDRPDKPEE. 2 disordered regions span residues 47-104 and 194-216; these read FTII…PKPD and GKMD…LESK. The span at 68–78 shows a compositional bias: pro residues; that stretch reads IPKPPKPPKGP. Residues 83–93 are compositionally biased toward low complexity; the sequence is EPGQPGGPDDP.

It belongs to the UPF0134 family.

This Mycoplasma pneumoniae (strain ATCC 29342 / M129 / Subtype 1) (Mycoplasmoides pneumoniae) protein is UPF0134 protein MPN_344.